The chain runs to 506 residues: MVSIRPDEISAILKQQIEDYDKSVSVSNVGSVLQVGDGIARVYGLQQVMAGELVEFEDGTEGIALNLEDDNVGAVLMGEGLGIQEGSTVRATGKIASVPVGDGLLGRVVNPLGVALDGKGDLGTTESRLIESPAPGIIQRKSVHEPMQTGITAIDAMIPIGRGQRELIIGDRQTGKTAIAIDTILNQKDQDVVCVYVAIGQKAASVAQVTEVLRERGALDYTVIVAANASDPAALQYLAPYTGASIAEYFMYKGKATLVIYDDLSKQAQAYRQMSLLLRRPPGREAYPGDVFYCHSRLLERAAKLSDAMGKGSMTALPIIETQAGDVSAYIPTNVISITDGQVFLSSDLFNSGLRPAINVGISVSRVGGAAQTKAIKKIAGTLKLELAQFDELAAFSQFASDLDAATQKQLGRGKRLRELLKQPQFSPLILAEQVAIVYAGVKGLIDDVPVDQVVQFSRELREYLKSNKPEFIEKIQTEKVLSPEAETMLKEAVAEVTSTMLATAN.

Position 170–177 (170–177) interacts with ATP; the sequence is GDRQTGKT.

This sequence belongs to the ATPase alpha/beta chains family. As to quaternary structure, F-type ATPases have 2 components, CF(1) - the catalytic core - and CF(0) - the membrane proton channel. CF(1) has five subunits: alpha(3), beta(3), gamma(1), delta(1), epsilon(1). CF(0) has four main subunits: a(1), b(1), b'(1) and c(9-12).

The protein resides in the cellular thylakoid membrane. It carries out the reaction ATP + H2O + 4 H(+)(in) = ADP + phosphate + 5 H(+)(out). Its function is as follows. Produces ATP from ADP in the presence of a proton gradient across the membrane. The alpha chain is a regulatory subunit. In Synechococcus sp. (strain WH7803), this protein is ATP synthase subunit alpha.